The following is a 182-amino-acid chain: Orotate phosphoribosyltransferase (182 aa).

Residues R91, K92, K95, H97, and 117–125 (EDVTTTGGS) contribute to the 5-phospho-alpha-D-ribose 1-diphosphate site. Orotate is bound by residues T121 and R149.

The protein belongs to the purine/pyrimidine phosphoribosyltransferase family. PyrE subfamily. Homodimer. It depends on Mg(2+) as a cofactor.

It carries out the reaction orotidine 5'-phosphate + diphosphate = orotate + 5-phospho-alpha-D-ribose 1-diphosphate. It participates in pyrimidine metabolism; UMP biosynthesis via de novo pathway; UMP from orotate: step 1/2. Functionally, catalyzes the transfer of a ribosyl phosphate group from 5-phosphoribose 1-diphosphate to orotate, leading to the formation of orotidine monophosphate (OMP). The sequence is that of Orotate phosphoribosyltransferase from Pyrococcus furiosus (strain ATCC 43587 / DSM 3638 / JCM 8422 / Vc1).